We begin with the raw amino-acid sequence, 165 residues long: uncharacterized protein (165 aa).

This is an uncharacterized protein from Saccharomyces cerevisiae (strain ATCC 204508 / S288c) (Baker's yeast).